The primary structure comprises 438 residues: Serine hydroxymethyltransferase (438 aa).

Residues L133 and 137-139 (GHL) each bind (6S)-5,6,7,8-tetrahydrofolate. K242 bears the N6-(pyridoxal phosphate)lysine mark.

It belongs to the SHMT family. Homodimer. Requires pyridoxal 5'-phosphate as cofactor.

The protein resides in the cytoplasm. It carries out the reaction (6R)-5,10-methylene-5,6,7,8-tetrahydrofolate + glycine + H2O = (6S)-5,6,7,8-tetrahydrofolate + L-serine. It functions in the pathway one-carbon metabolism; tetrahydrofolate interconversion. It participates in amino-acid biosynthesis; glycine biosynthesis; glycine from L-serine: step 1/1. Its function is as follows. Catalyzes the reversible interconversion of serine and glycine with tetrahydrofolate (THF) serving as the one-carbon carrier. This reaction serves as the major source of one-carbon groups required for the biosynthesis of purines, thymidylate, methionine, and other important biomolecules. Also exhibits THF-independent aldolase activity toward beta-hydroxyamino acids, producing glycine and aldehydes, via a retro-aldol mechanism. The chain is Serine hydroxymethyltransferase from Brucella canis (strain ATCC 23365 / NCTC 10854 / RM-666).